The chain runs to 160 residues: Small ribosomal subunit protein uS17z (160 aa).

It belongs to the universal ribosomal protein uS17 family.

The protein localises to the cytoplasm. The protein is Small ribosomal subunit protein uS17z (RPS11A) of Arabidopsis thaliana (Mouse-ear cress).